We begin with the raw amino-acid sequence, 259 residues long: HTH-type transcriptional regulator Rv1719 (259 aa).

Residues 13–75 (IQVIARAAEL…GARGPYRLGP (63 aa)) enclose the HTH iclR-type domain. The H-T-H motif DNA-binding region spans 35-54 (QAEIGERVGMARSTVSRILN). In terms of domain architecture, IclR-ED spans 88-259 (VVTEMHPFLT…AWFNGTEDRK (172 aa)).

In terms of assembly, homodimer.

In terms of biological role, binds to the upstream region of Rv1714 and probably modulates the expression of the downstream gene(s). The polypeptide is HTH-type transcriptional regulator Rv1719 (Mycobacterium tuberculosis (strain ATCC 25618 / H37Rv)).